An 88-amino-acid polypeptide reads, in one-letter code: Protein LE25 (88 aa).

Residues 1–88 (MQTGKDAASA…YGATGNHTTF (88 aa)) form a disordered region. The span at 14-65 (GMEKTKANVQEKAERMTTRDPLKKEMATEKKEDRVAAAEMGKRDAKAQHAAE) shows a compositional bias: basic and acidic residues.

The protein belongs to the LEA type 1 family. As to expression, accumulates in developing seeds and drought-stressed leaves.

The protein is Protein LE25 (LE25) of Solanum lycopersicum (Tomato).